The sequence spans 350 residues: Inhibin beta E chain (350 aa).

The signal sequence occupies residues Met-1 to Ser-21. A propeptide spanning residues Thr-22–Arg-236 is cleaved from the precursor. N-linked (GlcNAc...) asparagine glycosylation is present at Asn-198. 4 disulfides stabilise this stretch: Cys-240–Cys-248, Cys-247–Cys-315, Cys-276–Cys-347, and Cys-280–Cys-349.

The protein belongs to the TGF-beta family. Homodimeric or heterodimeric through association with alpha and beta subunits, linked by one or more disulfide bonds. Inhibins are heterodimers of one alpha and one beta subunit. Activins are homo- or heterodimers of beta subunits only.

The protein localises to the secreted. Its function is as follows. Inhibins and activins inhibit and activate, respectively, the secretion of follitropin by the pituitary gland. Inhibins/activins are involved in regulating a number of diverse functions such as hypothalamic and pituitary hormone secretion, gonadal hormone secretion, germ cell development and maturation, erythroid differentiation, insulin secretion, nerve cell survival, embryonic axial development or bone growth, depending on their subunit composition. Inhibins appear to oppose the functions of activins. Activin E is a homodimer of INHBE secreted by the liver that plays a crucial role in regulating metabolic homeostasis particularly in lipid metabolism and energy homeostasis. Plays a central role in the regulation of adipose tissue lipolysis by preventing the influx of fatty acids from adipose tissue into the liver. Mechanistically, signals via ACVR1C to activate SMAD2/3 signaling, suppressing PPARG target genes in adipose tissue, thereby reducing liver lipid content and improving glycemic control. Induces beige adipocyte formation and thermogenesis in response to cold exposure. In Rattus norvegicus (Rat), this protein is Inhibin beta E chain (Inhbe).